Here is a 759-residue protein sequence, read N- to C-terminus: TIR domain-containing adapter molecule 1 (759 aa).

The TRIF-NTD stretch occupies residues M1–G153. The TRAF6-binding motif lies at E84–D91. The pLxIS motif signature appears at L207–S210. A Phosphoserine modification is found at S210. K229 is covalently cross-linked (Glycyl lysine isopeptide (Lys-Gly) (interchain with G-Cter in ubiquitin)). The interval E241 to I296 is disordered. 2 consecutive short sequence motifs (TRAF6-binding) follow at residues Q248 to W255 and H299 to A309. A disordered region spans residues L340–S426. Positions V351–P365 are enriched in low complexity. The span at F366 to H376 shows a compositional bias: pro residues. The TIR domain occupies K430 to S590. Residues L549–E759 are sufficient to induce apoptosis. A disordered region spans residues G642–L723. Pro residues predominate over residues H659 to P705.

Homodimer. Found in a multi-helicase-TICAM1 complex at least composed of DHX36, DDX1, DDX21 and TICAM1; this complex exists in resting cells with or without poly(I:C) RNA ligand stimulation. Interacts (via TIR domain) with DDX21 (via C-terminus). Interacts (via TIR domain) with DHX36 (via C-terminus). Interacts with AZI2 and IRF7. Interacts with TICAM2 in TLR4 recruitment. Interaction with PIAS4 inhibits the TICAM1-induced NF-kappa-B, IRF and IFNB1 activation. Interacts with IKBKB and IKBKE. Interaction with SARM1 blocks TICAM1-dependent transcription factor activation. Interacts with TRAF3. Interacts (when phosphorylated) with IRF3; following activation and phosphorylation on the pLxIS motif by TBK1, recruits IRF3. Interacts with TBK1, TRAF6 and RIPK1 and these interactions are enhanced in the presence of WDFY1. Interacts with TRAFD1. Interacts with UBQLN1 (via UBA domain). Interacts with TLR4 in response to LPS in a WDFY1-dependent manner. Interacts with WDFY1 in response to poly(I:C). Interacts (via the TIR domain) with TLR3 in response to poly(I:C) and this interaction is enhanced in the presence of WDFY1. Interacts with TRIM56. Component of a multi-helicase-TICAM1 complex that acts as a cytoplasmic sensor of viral double-stranded RNA (dsRNA) and plays a role in the activation of a cascade of antiviral responses including the induction of pro-inflammatory cytokines. Interacts (via the TIR domain) with TLR5. Interacts with TRIM8. Interacts with TAX1BP1 and TRIM32; these interactions target TICAM1 to TAX1BP1-mediated selective autophagic degradation. Interacts with DDX50. Phosphorylated by TBK1. Following activation, phosphorylated by TBK1 at Ser-210 in the pLxIS motif. The phosphorylated pLxIS motif constitutes an IRF3-binding motif, leading to recruitment of the transcription factor IRF3 to induce type-I interferons and other cytokines. In terms of processing, polyubiquitinated at Lys-229 by TRIM38 with 'Lys-48'-linked chains, leading to proteasomal degradation. Polyubiquitinated with 'Lys-6' and 'Lys-33'-linked chains in a TRIM8-dependent manner.

Its subcellular location is the cytoplasmic vesicle. It is found in the autophagosome. It localises to the cytoplasm. The protein localises to the cytosol. The protein resides in the mitochondrion. Functionally, involved in innate immunity against invading pathogens. Adapter used by TLR3, TLR4 (through TICAM2) and TLR5 to mediate NF-kappa-B and interferon-regulatory factor (IRF) activation, and to induce apoptosis. Ligand binding to these receptors results in TRIF recruitment through its TIR domain. Distinct protein-interaction motifs allow recruitment of the effector proteins TBK1, TRAF6 and RIPK1, which in turn, lead to the activation of transcription factors IRF3 and IRF7, NF-kappa-B and FADD respectively. Phosphorylation by TBK1 on the pLxIS motif leads to recruitment and subsequent activation of the transcription factor IRF3 to induce expression of type I interferon and exert a potent immunity against invading pathogens. Component of a multi-helicase-TICAM1 complex that acts as a cytoplasmic sensor of viral double-stranded RNA (dsRNA) and plays a role in the activation of a cascade of antiviral responses including the induction of pro-inflammatory cytokines. The sequence is that of TIR domain-containing adapter molecule 1 (TICAM1) from Bos taurus (Bovine).